Consider the following 520-residue polypeptide: Maturase K (520 aa).

It belongs to the intron maturase 2 family. MatK subfamily.

The protein localises to the plastid. It is found in the chloroplast. Usually encoded in the trnK tRNA gene intron. Probably assists in splicing its own and other chloroplast group II introns. The protein is Maturase K of Iris cristata (Dwarf crested iris).